Reading from the N-terminus, the 184-residue chain is NADH-quinone oxidoreductase subunit B 1 (184 aa).

[4Fe-4S] cluster contacts are provided by Cys-37, Cys-38, Cys-103, and Cys-132.

This sequence belongs to the complex I 20 kDa subunit family. In terms of assembly, NDH-1 is composed of 14 different subunits. Subunits NuoB, C, D, E, F, and G constitute the peripheral sector of the complex. [4Fe-4S] cluster is required as a cofactor.

It is found in the cell membrane. It carries out the reaction a quinone + NADH + 5 H(+)(in) = a quinol + NAD(+) + 4 H(+)(out). Functionally, NDH-1 shuttles electrons from NADH, via FMN and iron-sulfur (Fe-S) centers, to quinones in the respiratory chain. The immediate electron acceptor for the enzyme in this species is believed to be a menaquinone. Couples the redox reaction to proton translocation (for every two electrons transferred, four hydrogen ions are translocated across the cytoplasmic membrane), and thus conserves the redox energy in a proton gradient. This chain is NADH-quinone oxidoreductase subunit B 1, found in Streptomyces griseus subsp. griseus (strain JCM 4626 / CBS 651.72 / NBRC 13350 / KCC S-0626 / ISP 5235).